The primary structure comprises 219 residues: Thiamine-phosphate synthase (219 aa).

Residues Gln44–Lys48 and Asn79 each bind 4-amino-2-methyl-5-(diphosphooxymethyl)pyrimidine. 2 residues coordinate Mg(2+): Asp80 and Asp99. Ser117 lines the 4-amino-2-methyl-5-(diphosphooxymethyl)pyrimidine pocket. Residue Thr143–Thr145 coordinates 2-[(2R,5Z)-2-carboxy-4-methylthiazol-5(2H)-ylidene]ethyl phosphate. Lys146 provides a ligand contact to 4-amino-2-methyl-5-(diphosphooxymethyl)pyrimidine. 2-[(2R,5Z)-2-carboxy-4-methylthiazol-5(2H)-ylidene]ethyl phosphate is bound by residues Gly175 and Ile195–Ser196.

The protein belongs to the thiamine-phosphate synthase family. Mg(2+) serves as cofactor.

The enzyme catalyses 2-[(2R,5Z)-2-carboxy-4-methylthiazol-5(2H)-ylidene]ethyl phosphate + 4-amino-2-methyl-5-(diphosphooxymethyl)pyrimidine + 2 H(+) = thiamine phosphate + CO2 + diphosphate. It carries out the reaction 2-(2-carboxy-4-methylthiazol-5-yl)ethyl phosphate + 4-amino-2-methyl-5-(diphosphooxymethyl)pyrimidine + 2 H(+) = thiamine phosphate + CO2 + diphosphate. The catalysed reaction is 4-methyl-5-(2-phosphooxyethyl)-thiazole + 4-amino-2-methyl-5-(diphosphooxymethyl)pyrimidine + H(+) = thiamine phosphate + diphosphate. It participates in cofactor biosynthesis; thiamine diphosphate biosynthesis; thiamine phosphate from 4-amino-2-methyl-5-diphosphomethylpyrimidine and 4-methyl-5-(2-phosphoethyl)-thiazole: step 1/1. In terms of biological role, condenses 4-methyl-5-(beta-hydroxyethyl)thiazole monophosphate (THZ-P) and 2-methyl-4-amino-5-hydroxymethyl pyrimidine pyrophosphate (HMP-PP) to form thiamine monophosphate (TMP). The polypeptide is Thiamine-phosphate synthase (Bacillus thuringiensis (strain Al Hakam)).